The following is a 402-amino-acid chain: Xylose/arabinose-binding protein XylF (402 aa).

Residues 38 to 58 (GIIAGVLAAFGAGFGSGYVTA) traverse the membrane as a helical segment.

This sequence belongs to the bacterial solute-binding protein 2 family. As to quaternary structure, the complex is composed of two ATP-binding proteins (XylG), two transmembrane proteins (XylH) and a solute-binding protein (XylF).

It is found in the cell membrane. In terms of biological role, part of the ABC transporter complex XylFGH involved in the uptake of xylose and arabinose. The chain is Xylose/arabinose-binding protein XylF from Sulfolobus acidocaldarius (strain ATCC 33909 / DSM 639 / JCM 8929 / NBRC 15157 / NCIMB 11770).